Reading from the N-terminus, the 319-residue chain is Ferrochelatase (319 aa).

Fe cation contacts are provided by H194 and E275.

Belongs to the ferrochelatase family.

It localises to the cytoplasm. It catalyses the reaction heme b + 2 H(+) = protoporphyrin IX + Fe(2+). It participates in porphyrin-containing compound metabolism; protoheme biosynthesis; protoheme from protoporphyrin-IX: step 1/1. Its function is as follows. Catalyzes the ferrous insertion into protoporphyrin IX. The chain is Ferrochelatase from Hamiltonella defensa subsp. Acyrthosiphon pisum (strain 5AT).